The following is a 182-amino-acid chain: Ribosome maturation factor RimM (182 aa).

Residues 103–182 (EDEFYWRELF…RIEVDWDPGF (80 aa)) form the PRC barrel domain.

It belongs to the RimM family. As to quaternary structure, binds ribosomal protein uS19.

Its subcellular location is the cytoplasm. In terms of biological role, an accessory protein needed during the final step in the assembly of 30S ribosomal subunit, possibly for assembly of the head region. Essential for efficient processing of 16S rRNA. May be needed both before and after RbfA during the maturation of 16S rRNA. It has affinity for free ribosomal 30S subunits but not for 70S ribosomes. The chain is Ribosome maturation factor RimM from Vibrio campbellii (strain ATCC BAA-1116).